The primary structure comprises 234 residues: Aspartate/glutamate leucyltransferase (234 aa).

It belongs to the R-transferase family. Bpt subfamily.

The protein resides in the cytoplasm. It catalyses the reaction N-terminal L-glutamyl-[protein] + L-leucyl-tRNA(Leu) = N-terminal L-leucyl-L-glutamyl-[protein] + tRNA(Leu) + H(+). The enzyme catalyses N-terminal L-aspartyl-[protein] + L-leucyl-tRNA(Leu) = N-terminal L-leucyl-L-aspartyl-[protein] + tRNA(Leu) + H(+). Functionally, functions in the N-end rule pathway of protein degradation where it conjugates Leu from its aminoacyl-tRNA to the N-termini of proteins containing an N-terminal aspartate or glutamate. The protein is Aspartate/glutamate leucyltransferase of Hahella chejuensis (strain KCTC 2396).